The following is a 489-amino-acid chain: Phenylalanine--tRNA ligase alpha subunit (489 aa).

L-phenylalanine is bound by residues T316, 355–357 (QLD), F395, and F420.

It belongs to the class-II aminoacyl-tRNA synthetase family. Phe-tRNA synthetase alpha subunit type 2 subfamily. As to quaternary structure, tetramer of two alpha and two beta subunits. The cofactor is Mg(2+).

The protein resides in the cytoplasm. The catalysed reaction is tRNA(Phe) + L-phenylalanine + ATP = L-phenylalanyl-tRNA(Phe) + AMP + diphosphate + H(+). In Pyrobaculum aerophilum (strain ATCC 51768 / DSM 7523 / JCM 9630 / CIP 104966 / NBRC 100827 / IM2), this protein is Phenylalanine--tRNA ligase alpha subunit.